The chain runs to 501 residues: Cobyric acid synthase (501 aa).

Residues Asp-252–Trp-443 form the GATase cobBQ-type domain. The active-site Nucleophile is the Cys-333. Residue His-435 is part of the active site.

Belongs to the CobB/CobQ family. CobQ subfamily.

Its pathway is cofactor biosynthesis; adenosylcobalamin biosynthesis. Catalyzes amidations at positions B, D, E, and G on adenosylcobyrinic A,C-diamide. NH(2) groups are provided by glutamine, and one molecule of ATP is hydrogenolyzed for each amidation. This is Cobyric acid synthase from Limosilactobacillus reuteri (strain DSM 20016) (Lactobacillus reuteri).